The sequence spans 167 residues: S-ribosylhomocysteine lyase (167 aa).

Positions 54, 58, and 128 each coordinate Fe cation.

It belongs to the LuxS family. In terms of assembly, homodimer. Requires Fe cation as cofactor.

It carries out the reaction S-(5-deoxy-D-ribos-5-yl)-L-homocysteine = (S)-4,5-dihydroxypentane-2,3-dione + L-homocysteine. Its function is as follows. Involved in the synthesis of autoinducer 2 (AI-2) which is secreted by bacteria and is used to communicate both the cell density and the metabolic potential of the environment. The regulation of gene expression in response to changes in cell density is called quorum sensing. Catalyzes the transformation of S-ribosylhomocysteine (RHC) to homocysteine (HC) and 4,5-dihydroxy-2,3-pentadione (DPD). This is S-ribosylhomocysteine lyase from Haemophilus influenzae (strain PittGG).